Here is a 247-residue protein sequence, read N- to C-terminus: 23S rRNA (guanosine-2'-O-)-methyltransferase RlmB (247 aa).

The S-adenosyl-L-methionine site is built by glycine 197, isoleucine 217, and leucine 226.

Belongs to the class IV-like SAM-binding methyltransferase superfamily. RNA methyltransferase TrmH family. RlmB subfamily.

Its subcellular location is the cytoplasm. The catalysed reaction is guanosine(2251) in 23S rRNA + S-adenosyl-L-methionine = 2'-O-methylguanosine(2251) in 23S rRNA + S-adenosyl-L-homocysteine + H(+). In terms of biological role, specifically methylates the ribose of guanosine 2251 in 23S rRNA. The protein is 23S rRNA (guanosine-2'-O-)-methyltransferase RlmB of Burkholderia sp.